Reading from the N-terminus, the 469-residue chain is MKLSRRQFLQRSTLAGVATVTPTSLWAKNRPSLTIPPMIEVGRGRPVRLDFRPAQTQFNKGKLVDVWGVNGRYLAPTVRVKSGDFVKLTYTNNLPQALSINIQGLQAPTEMIGSIHRAIDKNSSWSPILSVNQSACTAWYHADTMLNSAFQVYRGLAGLWIIEDSESRKASLPNKYGVNDIPLILQDQLINSDGIQVIDTQTNQFFGKRLFVNGQESPYFDVPRGWVRLRIANASLSRHYDLRLDNGKPLYLIATGIGFLADMVEMEHISLAPSERIEVLVDLNEGDKVSLITGKKRDFFDEIGKLFKDNNELNDNVVLEFRPEGLPSALNVTPKLPPFNVEEFNLKITQERKINLRPQDRLINHQRFDPKRIDFTVKKGTVERWYLTTTEEVGFTLQGAKFMVETRNRQAVPHKQLAWRDCVWLEPTQETTLLVKFEHTASEQQPFTFGVSDLMLRDRGCMGQFVVAE.

Residues 1 to 27 constitute a signal peptide (tat-type signal); sequence MKLSRRQFLQRSTLAGVATVTPTSLWA.

This sequence belongs to the FtsP family. Predicted to be exported by the Tat system. The position of the signal peptide cleavage has not been experimentally proven.

The protein localises to the periplasm. Cell division protein that is required for growth during stress conditions. May be involved in protecting or stabilizing the divisomal assembly under conditions of stress. The sequence is that of Cell division protein FtsP from Glaesserella parasuis serovar 5 (strain SH0165) (Haemophilus parasuis).